Consider the following 814-residue polypeptide: Coiled-coil and C2 domain-containing protein 1-like (814 aa).

A compositionally biased stretch (basic and acidic residues) spans 1–11; the sequence is MFAKRKPEPAK. Disordered stretches follow at residues 1-136 and 157-263; these read MFAK…TFLP and EANA…RSRQ. The segment covering 25-47 has biased composition (acidic residues); sequence IPDDFDPTSGYGDDDGGDSDLEA. The segment covering 73–85 has biased composition (basic and acidic residues); it reads DLDKMIADSLRDV. Acidic residues-rich tracts occupy residues 86-100 and 110-130; these read SDDDDDENLENDSDL and LEEEPEAEEAAAEPAASEEEP. Residues 143-201 form a DM14 1 region; that stretch reads LGIIKQRLEIYKQAEANAKASGDSGKARRFGRGLKTLQDLHKQAAAGKTINVDDIPPEV. Residues 205–230 are compositionally biased toward low complexity; the sequence is PAGDPSPAADESPAPSTPVSQPTRVA. Positions 231–254 are enriched in pro residues; sequence PAPPTPTSPPAATPPPAPATPPNP. DM14 stretches follow at residues 256-314 and 358-416; these read VAQM…PPPP and LEAL…PVPP. The stretch at 351–378 forms a coiled coil; it reads AAAAESMLEALQRRLEKYKSVEAAAKAE. A compositionally biased stretch (pro residues) spans 414–425; the sequence is VPPGFGPLPSTE. The segment at 414–486 is disordered; that stretch reads VPPGFGPLPS…LTTRVTGNHQ (73 aa). The span at 426-462 shows a compositional bias: low complexity; the sequence is PAPAATPSLPTSPTSPPATASTSAGGTPSGSSATTPT. Polar residues predominate over residues 475–486; that stretch reads TELTTRVTGNHQ. A DM14 4 region spans residues 495–553; the sequence is MKLLLERQKEFKVAAIEAKKAGEIDQAKEYLKIYKGFDSLLNAASSGLPVDLSTLPVPP. Positions 633-772 constitute a C2 domain; it reads RKGQPLPKFH…ETKCDIHDTY (140 aa).

This sequence belongs to the CC2D1 family. In terms of assembly, interacts (via DM14 domains 1 and 3) with shrb; the interaction is direct and blocks access to the surface involved in shrb polymerization. This interaction may be required for the ESCRT-III complex role in multivesicular body formation.

Its subcellular location is the cytoplasm. The protein resides in the cytosol. It is found in the apicolateral cell membrane. The protein localises to the cell cortex. It localises to the endosome. In terms of biological role, phosphatidyl inositol monophosphate binding protein involved in endosomal protein sorting through regulation of the endosomal sorting required for transport (ESCRT) pathway. Required for full activity of the ESCRT-III complex core component shrb/shrub, probably by preventing its inappropriate polymerisation. Required, but not essential, for the efficient generation of intraluminal vesicles (ILVs) in multivesicular bodies (MVBs). Involved in a late stage of the endosomal pathway targeting transmembrane proteins of the plasma membrane for lysosomal degradation. Plays a critical role in regulation of multiple signal transduction pathways, including the Notch and BMP/decapentaplegic (dpp) signaling pathways, through targeting of membrane bound receptors to multivesicular bodies, isolating them from the cytoplasm and targeting them for lysosomal degradation. Involved in targeting N/Notch for endosomal degradation, negatively regulating the Notch signaling pathway. Regulates Notch signaling in imaginal disk cells and follicle cells during oogenesis and multiple developmental processes, including development of wings, veins, legs, eyes and bristles. Restricts the activity of Notch to the dorsoventral (D/V) boundary of the wing imaginal disk. In external sensory organ development regulates Notch signaling during asymmetric cell division and differentiation of sensory organ precursor cells. May be involved in regulation of apoptosis and cell growth independent of Notch signaling. Involved in targeting tkv for endosomal degradation, negatively regulating the BMP/decapentaplegic (dpp) signaling pathway. Regulates the BMP/dpp signaling pathway in follicle cells during oogenesis, but not in imaginal disk cells during wing development. May be involved in differentiation or morphogenesis of peripodial epithelial cells in the developing imaginal disk. Involved in abscission of germline cells during oogenesis. The sequence is that of Coiled-coil and C2 domain-containing protein 1-like from Drosophila pseudoobscura pseudoobscura (Fruit fly).